The primary structure comprises 158 residues: UPF0262 protein Rsph17029_2283 (158 aa).

This sequence belongs to the UPF0262 family.

This is UPF0262 protein Rsph17029_2283 from Cereibacter sphaeroides (strain ATCC 17029 / ATH 2.4.9) (Rhodobacter sphaeroides).